The following is a 154-amino-acid chain: Ribonuclease H (154 aa).

In terms of domain architecture, RNase H type-1 spans 5–146 (EQNIVYLYCD…ADELANRGID (142 aa)). 4 residues coordinate Mg(2+): D14, E52, D74, and D138.

The protein belongs to the RNase H family. In terms of assembly, monomer. Mg(2+) serves as cofactor.

It is found in the cytoplasm. It catalyses the reaction Endonucleolytic cleavage to 5'-phosphomonoester.. Its function is as follows. Endonuclease that specifically degrades the RNA of RNA-DNA hybrids. The chain is Ribonuclease H from Coxiella burnetii (strain CbuG_Q212) (Coxiella burnetii (strain Q212)).